The sequence spans 250 residues: 2,3-bisphosphoglycerate-dependent phosphoglycerate mutase (250 aa).

Substrate is bound by residues 10 to 17, 23 to 24, R62, 89 to 92, K100, 116 to 117, and 185 to 186; these read RHGESVWN, TG, ERHY, RR, and GN. Residue H11 is the Tele-phosphohistidine intermediate of the active site. The active-site Proton donor/acceptor is E89.

This sequence belongs to the phosphoglycerate mutase family. BPG-dependent PGAM subfamily. As to quaternary structure, homodimer.

The enzyme catalyses (2R)-2-phosphoglycerate = (2R)-3-phosphoglycerate. It participates in carbohydrate degradation; glycolysis; pyruvate from D-glyceraldehyde 3-phosphate: step 3/5. Catalyzes the interconversion of 2-phosphoglycerate and 3-phosphoglycerate. The chain is 2,3-bisphosphoglycerate-dependent phosphoglycerate mutase from Proteus mirabilis (strain HI4320).